A 164-amino-acid chain; its full sequence is SsrA-binding protein (164 aa).

The protein belongs to the SmpB family.

The protein resides in the cytoplasm. Functionally, required for rescue of stalled ribosomes mediated by trans-translation. Binds to transfer-messenger RNA (tmRNA), required for stable association of tmRNA with ribosomes. tmRNA and SmpB together mimic tRNA shape, replacing the anticodon stem-loop with SmpB. tmRNA is encoded by the ssrA gene; the 2 termini fold to resemble tRNA(Ala) and it encodes a 'tag peptide', a short internal open reading frame. During trans-translation Ala-aminoacylated tmRNA acts like a tRNA, entering the A-site of stalled ribosomes, displacing the stalled mRNA. The ribosome then switches to translate the ORF on the tmRNA; the nascent peptide is terminated with the 'tag peptide' encoded by the tmRNA and targeted for degradation. The ribosome is freed to recommence translation, which seems to be the essential function of trans-translation. This is SsrA-binding protein from Shewanella woodyi (strain ATCC 51908 / MS32).